Reading from the N-terminus, the 433-residue chain is Pyrimidine-nucleoside phosphorylase (433 aa).

Position 81-83 (81-83 (KHS)) interacts with phosphate. 2 residues coordinate K(+): glycine 88 and threonine 90. Residues threonine 92, 108-110 (KMS), and threonine 120 each bind phosphate. Residues arginine 168 and lysine 187 each coordinate substrate. Residues leucine 243, alanine 246, and glutamate 255 each coordinate K(+).

It belongs to the thymidine/pyrimidine-nucleoside phosphorylase family. As to quaternary structure, homodimer. The cofactor is K(+).

It carries out the reaction uridine + phosphate = alpha-D-ribose 1-phosphate + uracil. It catalyses the reaction thymidine + phosphate = 2-deoxy-alpha-D-ribose 1-phosphate + thymine. The catalysed reaction is 2'-deoxyuridine + phosphate = 2-deoxy-alpha-D-ribose 1-phosphate + uracil. Its function is as follows. Catalyzes phosphorolysis of the pyrimidine nucleosides uridine, thymidine and 2'-deoxyuridine with the formation of the corresponding pyrimidine base and ribose-1-phosphate. The polypeptide is Pyrimidine-nucleoside phosphorylase (pdp) (Staphylococcus epidermidis (strain ATCC 12228 / FDA PCI 1200)).